The sequence spans 259 residues: Protein unc-50 homolog (259 aa).

At M1 the chain carries N-acetylmethionine. Over M1–P82 the chain is Cytoplasmic. A Phosphoserine modification is found at S6. A helical membrane pass occupies residues A83–L103. The Lumenal portion of the chain corresponds to D104–L115. The helical transmembrane segment at W116–I136 threads the bilayer. Residues S137–A163 are Cytoplasmic-facing. Residues F164 to L184 traverse the membrane as a helical segment. At T185–T187 the chain is on the lumenal side. Residues F188–V208 traverse the membrane as a helical segment. The Cytoplasmic segment spans residues T209–T222. A helical transmembrane segment spans residues V223–G243. The Lumenal segment spans residues W244–K259.

Belongs to the unc-50 family. As to expression, present in periodontal ligament fibroblasts (at protein level).

It is found in the nucleus inner membrane. Its subcellular location is the golgi apparatus membrane. In terms of biological role, involved in the cell surface expression of neuronal nicotinic receptors. Binds RNA. This is Protein unc-50 homolog (UNC50) from Homo sapiens (Human).